The primary structure comprises 947 residues: Transcriptional regulator WAR1 (947 aa).

The span at 1-10 shows a compositional bias: basic and acidic residues; sequence MSDTTPEKGS. The tract at residues 1–52 is disordered; the sequence is MSDTTPEKGSVDSVSPSASNGSNTNNPLNNSSPQPLKSNESDKKPKVTRRSV. Positions 19–38 are enriched in low complexity; it reads SNGSNTNNPLNNSSPQPLKS. Positions 54 to 86 form a DNA-binding region, zn(2)-C6 fungal-type; it reads CKSCHSLKVKCTPSDPNNPSAPCVRCINANRIC. The interval 96–222 is disordered; that stretch reads RRKKSEILEA…SPTSKDDEIN (127 aa). Over residues 129–142 the composition is skewed to low complexity; the sequence is NSSENYSSSINNAN. Composition is skewed to polar residues over residues 143–158 and 167–185; these read DSSL…TFDP and QASS…QSAA.

As to quaternary structure, homodimer.

The protein localises to the nucleus. In terms of biological role, transcription factor required for yeast cell adherence to silicone substrate. Plays a role in resistance to weak organic acids such as acetate and sorbate. Binds in vitro to a nitric oxide-responsive element (NORE) but seems not to be involved in response to nitrosative stress. The polypeptide is Transcriptional regulator WAR1 (WAR1) (Candida albicans (strain SC5314 / ATCC MYA-2876) (Yeast)).